The following is a 381-amino-acid chain: CCN family member 1 (381 aa).

An N-terminal signal peptide occupies residues 1-24 (MSSRIARALALVVTLLHLTRLALS). The IGFBP N-terminal domain occupies 25 to 94 (TCPAACHCPL…TALKGICRAQ (70 aa)). Disulfide bonds link C26–C50, C30–C52, C32–C53, C39–C56, C64–C78, and C70–C91. In terms of domain architecture, VWFC spans 98–164 (RPCEYNSRIY…GQCCEEWVCD (67 aa)). Residue S188 is modified to Phosphoserine; by FAM20C. Residues 228–273 (KCIVQTTSWSQCSKTCGTGISTRVTNDNPECRLVKETRICEVRPCG) form the TSP type-1 domain. Residues 279-315 (SLKKGKKCSKTKKSPEPVRFTYAGCLSVKKYRPKYCG) are heparin-binding. 5 cysteine pairs are disulfide-bonded: C286/C323, C303/C337, C314/C353, C317/C355, and C322/C359. In terms of domain architecture, CTCK spans 286 to 360 (CSKTKKSPEP…QSCKCNYNCP (75 aa)).

It belongs to the CCN family. Interaction with integrins is heparin- and cell-type-dependent and promotes cell adhesion. In skin fibroblasts it binds ITGA6/ITGB1, in endothelial cells, binds ITGAV/ITGB3 and in platelets, ITGA2B/ITGB3. Binds, in vitro, ITGAV/ITGB5.

The protein localises to the secreted. In terms of biological role, promotes cell proliferation, chemotaxis, angiogenesis and cell adhesion. Appears to play a role in wound healing by up-regulating, in skin fibroblasts, the expression of a number of genes involved in angiogenesis, inflammation and matrix remodeling including VEGA-A, VEGA-C, MMP1, MMP3, TIMP1, uPA, PAI-1 and integrins alpha-3 and alpha-5. CCN1-mediated gene regulation is dependent on heparin-binding. Down-regulates the expression of alpha-1 and alpha-2 subunits of collagen type-1. Promotes cell adhesion and adhesive signaling through integrin alpha-6/beta-1, cell migration through integrin alpha-v/beta-5 and cell proliferation through integrin alpha-v/beta-3. The protein is CCN family member 1 of Homo sapiens (Human).